The following is a 250-amino-acid chain: UPF0758 protein tlr1707 (250 aa).

An MPN domain is found at 116-239; the sequence is TIIDSPALAA…YQSLREITPL (124 aa). Residues H188, H190, and D201 each coordinate Zn(2+). The short motif at 188-201 is the JAMM motif element; sequence HNHPSGNLSPSQAD.

This sequence belongs to the UPF0758 family.

This is UPF0758 protein tlr1707 from Thermosynechococcus vestitus (strain NIES-2133 / IAM M-273 / BP-1).